A 131-amino-acid chain; its full sequence is Pancreatic polypeptide prohormone (131 aa).

The signal sequence occupies residues 1-29 (MAAAHRCLFLLLLSTCVALLLQPPLGALG). Y65 is modified (tyrosine amide).

It belongs to the NPY family.

The protein resides in the secreted. Hormone secreted by pancreatic cells that acts as a regulator of pancreatic and gastrointestinal functions probably by signaling through the G protein-coupled receptor NPY4R2. The polypeptide is Pancreatic polypeptide prohormone (PPY) (Bos taurus (Bovine)).